Consider the following 969-residue polypeptide: MTFALGQRWISDTESDLGLGTVVAMDARTVTLMFAASEENRVYARNDAPVTRVTFNVGDVIDCQEGWSLKVEEVLEDEGLYTYFGTREDTQETAVVLREIFLSNQIRFNKPQDKLYAGQIDRMDNFVLRYRALTNQFEQHKSPMRGLCGMRAGLIPHQLYIAHEVGRRHAPRVLLADEVGLGKTIEAGMIIHQQVLSGRAERILIVVPETLQHQWLVEMMRRFNLHFSIFDEERCIEAFADAENPFDTQQYVLCSLDFLRKSRKRFEQALEGEWDLLVVDEAHHLEWSQDKPSREYQVVEGLAERTPGVLLLTATPEQLGRESHFARLRLLDPDRFYDYEAFVEEEEQYAPVADAITSLFSGEKLPDEAKNQITELLSEQDVEPLFRIIESNSDEEAKASARQELIDNLMDRHGTGRVLFRNTRAAIKGFPTRNVHLMPMDIPQQYTTSMRVAGMIGGKMSSEARAMKNLYPEEIFQEFEGDDASWWQFDSRVNWLLEKVKEKRGEKILVIASRASTALQLEQALREREGIRATVFHEGMSILERDKAAAYFAQEEGGAQVLICSEIGSEGRNFQFANQLVMFDLPFNPDLLEQRIGRLDRIGQNRDIDIHVPYLKGTSQAILARWFDEGLNAFAETCPTGRAVYDKYSDALIEILASGDTSTLDEIIEESAKLNKELKSQLEQGRDRLLEMHSNGGEKAQQIVEKIESTDGDTNLVTFALSLFDTIGLNQDDKGENALVVTPSEHMMVPSYPGLPYEGATITFDRDTALSREDMHFISWEHPMIQGGIDLLMSEGVGTSAVSLLKNKALPVGTILLELIYAVDAQAPKRSGITRFLPKTPIRLMMDSRGNDLSAQVEFEGFNRQLSPVNRHLGSKLVTSVQKDVHRLIEAGDVLVEEKVEAVRKQAQQDMQQSLNTELERLQALKAVNPNIRDEEIEAIEAQIKELTGYINQAQVQLDSLRLIVVSHN.

A Helicase ATP-binding domain is found at 164–334 (EVGRRHAPRV…FARLRLLDPD (171 aa)). 177-184 (DEVGLGKT) contributes to the ATP binding site. Residues 280–283 (DEAH) carry the DEAH box motif. One can recognise a Helicase C-terminal domain in the interval 492–686 (RVNWLLEKVK…ELKSQLEQGR (195 aa)).

The protein belongs to the SNF2/RAD54 helicase family. RapA subfamily. In terms of assembly, interacts with the RNAP. Has a higher affinity for the core RNAP than for the holoenzyme. Its ATPase activity is stimulated by binding to RNAP.

In terms of biological role, transcription regulator that activates transcription by stimulating RNA polymerase (RNAP) recycling in case of stress conditions such as supercoiled DNA or high salt concentrations. Probably acts by releasing the RNAP, when it is trapped or immobilized on tightly supercoiled DNA. Does not activate transcription on linear DNA. Probably not involved in DNA repair. This Vibrio parahaemolyticus serotype O3:K6 (strain RIMD 2210633) protein is RNA polymerase-associated protein RapA.